A 396-amino-acid polypeptide reads, in one-letter code: L-lactate dehydrogenase (396 aa).

An FMN hydroxy acid dehydrogenase domain is found at M1–G380. Residue Y24 participates in substrate binding. 2 residues coordinate FMN: S106 and Q127. Y129 lines the substrate pocket. T155 is an FMN binding site. R164 lines the substrate pocket. FMN is bound at residue K251. Residue H275 is the Proton acceptor of the active site. R278 is a substrate binding site. Residue D306–R330 participates in FMN binding.

Belongs to the FMN-dependent alpha-hydroxy acid dehydrogenase family. FMN serves as cofactor.

The protein resides in the cell inner membrane. It catalyses the reaction (S)-lactate + A = pyruvate + AH2. Functionally, catalyzes the conversion of L-lactate to pyruvate. Is coupled to the respiratory chain. The polypeptide is L-lactate dehydrogenase (Shigella boydii serotype 4 (strain Sb227)).